We begin with the raw amino-acid sequence, 296 residues long: Probable porphobilinogen deaminase (296 aa).

C241 carries the S-(dipyrrolylmethanemethyl)cysteine modification.

It belongs to the HMBS family. Dipyrromethane is required as a cofactor.

The enzyme catalyses 4 porphobilinogen + H2O = hydroxymethylbilane + 4 NH4(+). It participates in porphyrin-containing compound metabolism; protoporphyrin-IX biosynthesis; coproporphyrinogen-III from 5-aminolevulinate: step 2/4. Its function is as follows. Tetrapolymerization of the monopyrrole PBG into the hydroxymethylbilane pre-uroporphyrinogen in several discrete steps. The polypeptide is Probable porphobilinogen deaminase (Pyrobaculum calidifontis (strain DSM 21063 / JCM 11548 / VA1)).